We begin with the raw amino-acid sequence, 141 residues long: Small ribosomal subunit protein uS12 (141 aa).

D89 bears the 3-methylthioaspartic acid mark. Residues 104–141 are disordered; sequence ASGAVGPSNTNKLNRNVSRSKYGVKRPKAGAKPASKAK. The span at 110-122 shows a compositional bias: polar residues; that stretch reads PSNTNKLNRNVSR. The span at 125–141 shows a compositional bias: basic residues; it reads YGVKRPKAGAKPASKAK.

Belongs to the universal ribosomal protein uS12 family. Part of the 30S ribosomal subunit. Contacts proteins S8 and S17. May interact with IF1 in the 30S initiation complex.

With S4 and S5 plays an important role in translational accuracy. Functionally, interacts with and stabilizes bases of the 16S rRNA that are involved in tRNA selection in the A site and with the mRNA backbone. Located at the interface of the 30S and 50S subunits, it traverses the body of the 30S subunit contacting proteins on the other side and probably holding the rRNA structure together. The combined cluster of proteins S8, S12 and S17 appears to hold together the shoulder and platform of the 30S subunit. This chain is Small ribosomal subunit protein uS12, found in Methylacidiphilum infernorum (isolate V4) (Methylokorus infernorum (strain V4)).